The sequence spans 165 residues: Ubiquitin-fold modifier-conjugating enzyme 1 (165 aa).

The active-site Glycyl thioester intermediate is the Cys116.

This sequence belongs to the ubiquitin-conjugating enzyme family. UFC1 subfamily.

Functionally, E2-like enzyme which forms an intermediate with UFM1 via a thioester linkage. The protein is Ubiquitin-fold modifier-conjugating enzyme 1 of Drosophila mojavensis (Fruit fly).